Reading from the N-terminus, the 72-residue chain is Translation initiation factor IF-1 (72 aa).

Residues 1-72 (MAKEEVLEFP…TKGRITYRFK (72 aa)) enclose the S1-like domain.

It belongs to the IF-1 family. Component of the 30S ribosomal translation pre-initiation complex which assembles on the 30S ribosome in the order IF-2 and IF-3, IF-1 and N-formylmethionyl-tRNA(fMet); mRNA recruitment can occur at any time during PIC assembly.

The protein localises to the cytoplasm. One of the essential components for the initiation of protein synthesis. Stabilizes the binding of IF-2 and IF-3 on the 30S subunit to which N-formylmethionyl-tRNA(fMet) subsequently binds. Helps modulate mRNA selection, yielding the 30S pre-initiation complex (PIC). Upon addition of the 50S ribosomal subunit IF-1, IF-2 and IF-3 are released leaving the mature 70S translation initiation complex. In Brucella abortus (strain 2308), this protein is Translation initiation factor IF-1.